The following is a 144-amino-acid chain: Deoxyuridine 5'-triphosphate nucleotidohydrolase (144 aa).

Substrate contacts are provided by residues 63–65 (RSG), asparagine 76, and 80–82 (TID).

The protein belongs to the dUTPase family. The cofactor is Mg(2+).

It catalyses the reaction dUTP + H2O = dUMP + diphosphate + H(+). Its pathway is pyrimidine metabolism; dUMP biosynthesis; dUMP from dCTP (dUTP route): step 2/2. Functionally, this enzyme is involved in nucleotide metabolism: it produces dUMP, the immediate precursor of thymidine nucleotides and it decreases the intracellular concentration of dUTP so that uracil cannot be incorporated into DNA. This is Deoxyuridine 5'-triphosphate nucleotidohydrolase from Bacteroides fragilis (strain YCH46).